The sequence spans 112 residues: MLLFCYCLLLGTRIGTRIGTRIFIVHPIISPLIAVETAKKKKHIKWRFLDYSLLKNPLYVTVHGSHRSEVERARKRIKYITCTRREFLPRVPISFYQRFFSVFCRNYPSFLL.

This is an uncharacterized protein from Saccharomyces cerevisiae (strain ATCC 204508 / S288c) (Baker's yeast).